The following is a 163-amino-acid chain: uncharacterized protein (163 aa).

Residues 101-162 adopt a coiled-coil conformation; it reads LESMKVERKP…KMGERILERE (62 aa).

This is an uncharacterized protein from Aquifex aeolicus (strain VF5).